Reading from the N-terminus, the 664-residue chain is MTPPPPGRAAPSAPRARVLSLPARFGLPLRLRLLLVFWVAAASAQGHSRSGPRISAVWKGQDHVDFSQPEPHTVLFHEPGSFSVWVGGRGKVYHFNFPEGKNASVRTVNIGSTKGSCQDKQDCGNYITLLERRGNGLLVCGTNARKPSCWNLVNDSVVMSLGEMKGYAPFSPDENSLVLFEGDEVYSTIRKQEYNGKIPRFRRIRGESELYTSDTVMQNPQFIKATIVHQDQAYDDKIYYFFREDNPDKNPEAPLNVSRVAQLCRGDQGGESSLSVSKWNTFLKAMLVCSDAATNRNFNRLQDVFLLPDPSGQWRDTRVYGVFSNPWNYSAVCVYSLGDIDRVFRTSSLKGYHMGLPNPRPGMCLPKKQPIPTETFQVADSHPEVAQRVEPMGPLKTPLFHSKYHYQKVVVHRMQASNGETFHVLYLTTDRGTIHKVVESGDQDHSFVFNIMEIQPFHRAAAIQAISLDADRRKLYVTSQWEVSQVPLDMCEVYSGGCHGCLMSRDPYCGWDQDRCVSIYSSQRSVLQSINPAEPHRECPNPKPDEAPLQKVSLARNSRYYLTCPMESRHATYLWRHEENVEQSCEPGHQSPSCILFIENLTARQYGHYRCEAQEGSYLREAQHWELLPEDRALAEQLMGHARALAASFWLGVLPTLILGLLVH.

Positions 1–44 are cleaved as a signal peptide; that stretch reads MTPPPPGRAAPSAPRARVLSLPARFGLPLRLRLLLVFWVAAASA. One can recognise a Sema domain in the interval 53-488; sequence RISAVWKGQD…SQWEVSQVPL (436 aa). An N-linked (GlcNAc...) asparagine glycan is attached at Asn102. Cys117 and Cys123 are disulfide-bonded. An Asymmetric dimethylarginine modification is found at Arg132. An intrachain disulfide couples Cys140 to Cys149. 2 N-linked (GlcNAc...) asparagine glycosylation sites follow: Asn154 and Asn256. 7 disulfides stabilise this stretch: Cys264-Cys364, Cys289-Cys333, Cys491-Cys509, Cys498-Cys539, Cys501-Cys516, Cys564-Cys611, and Cys585-Cys594. Residues 265 to 267 form an interaction with integrins region; sequence RGD. Residues 265–267 carry the Cell attachment site motif; sequence RGD. The N-linked (GlcNAc...) asparagine glycan is linked to Asn328. The Ig-like C2-type domain maps to 542–627; it reads PKPDEAPLQK…YLREAQHWEL (86 aa). N-linked (GlcNAc...) asparagine glycosylation is present at Asn600. Ala646 carries the GPI-anchor amidated alanine lipid modification. Residues 647–664 constitute a propeptide, removed in mature form; sequence ASFWLGVLPTLILGLLVH.

This sequence belongs to the semaphorin family. In terms of assembly, interacts with PLXNC1. Interacts with ITGA1 and ITGB1. Highly expressed in activated T-cells (at protein level). Highest expression in brain. Lower in heart, thymus, spleen, testis and ovary. The expression increases in late embryonic and postnatal stages. Detected in T-cells.

The protein resides in the cell membrane. Functionally, plays an important role in integrin-mediated signaling and functions both in regulating cell migration and immune responses. Promotes formation of focal adhesion complexes, activation of the protein kinase PTK2/FAK1 and subsequent phosphorylation of MAPK1 and MAPK3. Promotes production of pro-inflammatory cytokines by monocytes and macrophages. Plays an important role in modulating inflammation and T-cell-mediated immune responses. Promotes axon growth in the embryonic olfactory bulb. Promotes attachment, spreading and dendrite outgrowth in melanocytes. The sequence is that of Semaphorin-7A (Sema7a) from Mus musculus (Mouse).